Reading from the N-terminus, the 98-residue chain is NADH-ubiquinone oxidoreductase chain 4L (98 aa).

A run of 3 helical transmembrane segments spans residues 1–21 (MASIYLNLMMAFLLALSGVLI), 26–46 (LMSTLLCLEGMMLSLFIMMTL), and 59–79 (APLILLVFSACEAGIGLALLV).

It belongs to the complex I subunit 4L family. Core subunit of respiratory chain NADH dehydrogenase (Complex I) which is composed of 45 different subunits.

It localises to the mitochondrion inner membrane. The catalysed reaction is a ubiquinone + NADH + 5 H(+)(in) = a ubiquinol + NAD(+) + 4 H(+)(out). Its function is as follows. Core subunit of the mitochondrial membrane respiratory chain NADH dehydrogenase (Complex I) which catalyzes electron transfer from NADH through the respiratory chain, using ubiquinone as an electron acceptor. Part of the enzyme membrane arm which is embedded in the lipid bilayer and involved in proton translocation. This Caenolestes fuliginosus (Shrew opossum) protein is NADH-ubiquinone oxidoreductase chain 4L (MT-ND4L).